We begin with the raw amino-acid sequence, 211 residues long: ATP phosphoribosyltransferase (211 aa).

It belongs to the ATP phosphoribosyltransferase family. Short subfamily. Heteromultimer composed of HisG and HisZ subunits.

Its subcellular location is the cytoplasm. It catalyses the reaction 1-(5-phospho-beta-D-ribosyl)-ATP + diphosphate = 5-phospho-alpha-D-ribose 1-diphosphate + ATP. It functions in the pathway amino-acid biosynthesis; L-histidine biosynthesis; L-histidine from 5-phospho-alpha-D-ribose 1-diphosphate: step 1/9. Catalyzes the condensation of ATP and 5-phosphoribose 1-diphosphate to form N'-(5'-phosphoribosyl)-ATP (PR-ATP). Has a crucial role in the pathway because the rate of histidine biosynthesis seems to be controlled primarily by regulation of HisG enzymatic activity. This Bacillus cereus (strain ATCC 10987 / NRS 248) protein is ATP phosphoribosyltransferase.